Consider the following 475-residue polypeptide: Lipid II flippase MurJ (475 aa).

The Cytoplasmic segment spans residues 1-2 (MS). The helical transmembrane segment at 3 to 23 (ILFSSILFSIATFFSRILGLF) threads the bilayer. Topologically, residues 24 to 35 (RDVLFAKYFGVS) are periplasmic. The chain crosses the membrane as a helical span at residues 36–56 (YELDAYFIAIMFPFFLRKVFG). At 57-78 (EGAMSSAFVPLYSEKSGEEKDK) the chain is on the cytoplasmic side. The helical transmembrane segment at 79 to 99 (FLSSVINGFSLIILALVILSY) threads the bilayer. Residues 100–123 (FFPELIINLFGAGSSHETKILAKK) lie on the Periplasmic side of the membrane. The chain crosses the membrane as a helical span at residues 124–144 (LLLITSPSIYFIFLWAISYSI). Over 145 to 150 (LNTNNK) the chain is Cytoplasmic. The helical transmembrane segment at 151–171 (FFWPALTPSISNITIIIGTFL) threads the bilayer. Over 172-175 (STKY) the chain is Periplasmic. Residues 176-196 (GIISPTIGFLIGSILMFFSII) form a helical membrane-spanning segment. Topologically, residues 197-213 (KSIIKHKYYFTIKHFPH) are cytoplasmic. A helical membrane pass occupies residues 214–238 (FLKLFFPTFMTMVVSQINTVVDMNV). The Periplasmic portion of the chain corresponds to 239–249 (VSFYDKGSISY). The chain crosses the membrane as a helical span at residues 250 to 271 (LQYASRFYLLPYGLFAVSVSTV). The Cytoplasmic segment spans residues 272–287 (VLSKISNDRKNFNYHL). Residues 288–308 (NDALKTTLFFTIPSMVGLIFL) traverse the membrane as a helical segment. Over 309–332 (STPIIRFFYEHGAFTSKDTLITSK) the chain is Periplasmic. The helical transmembrane segment at 333–353 (ILIAYTLGLPFYGIYSTISRS) threads the bilayer. Residues 354-362 (YHAIKNTKT) are Cytoplasmic-facing. The chain crosses the membrane as a helical span at residues 363 to 383 (PFIAATIVSLSNIILDIIFGL). The Periplasmic portion of the chain corresponds to 384-386 (KYG). The helical transmembrane segment at 387-407 (PIGVALATSIAGIIGVLYLLF) threads the bilayer. At 408-416 (SVKTFPIKD) the chain is on the cytoplasmic side. Residues 417-437 (FLKISLNSLIMLFVIYLTDFT) form a helical membrane-spanning segment. Topologically, residues 438–440 (DNE) are periplasmic. The helical transmembrane segment at 441-461 (FWFLIQILIGILVYLIFSSIF) threads the bilayer. At 462–475 (YRDLIRRFLYARKK) the chain is on the cytoplasmic side.

It belongs to the MurJ/MviN family.

Its subcellular location is the cell inner membrane. It functions in the pathway cell wall biogenesis; peptidoglycan biosynthesis. Functionally, involved in peptidoglycan biosynthesis. Transports lipid-linked peptidoglycan precursors from the inner to the outer leaflet of the cytoplasmic membrane. The protein is Lipid II flippase MurJ of Thermosipho africanus (strain TCF52B).